Here is a 272-residue protein sequence, read N- to C-terminus: Shikimate dehydrogenase (NADP(+)) (272 aa).

Shikimate contacts are provided by residues 14–16 (SKS) and Thr-61. The Proton acceptor role is filled by Lys-65. An NADP(+)-binding site is contributed by Glu-77. Asn-86 and Asp-102 together coordinate shikimate. NADP(+)-binding positions include 126-130 (GAGGA), 149-154 (NRTASR), and Met-213. Tyr-215 is a shikimate binding site. NADP(+) is bound at residue Gly-237.

It belongs to the shikimate dehydrogenase family. In terms of assembly, homodimer.

It catalyses the reaction shikimate + NADP(+) = 3-dehydroshikimate + NADPH + H(+). Its pathway is metabolic intermediate biosynthesis; chorismate biosynthesis; chorismate from D-erythrose 4-phosphate and phosphoenolpyruvate: step 4/7. Functionally, involved in the biosynthesis of the chorismate, which leads to the biosynthesis of aromatic amino acids. Catalyzes the reversible NADPH linked reduction of 3-dehydroshikimate (DHSA) to yield shikimate (SA). This Salmonella schwarzengrund (strain CVM19633) protein is Shikimate dehydrogenase (NADP(+)).